Consider the following 443-residue polypeptide: D-inositol 3-phosphate glycosyltransferase (443 aa).

Residue His30 coordinates 1D-myo-inositol 3-phosphate. UDP-N-acetyl-alpha-D-glucosamine contacts are provided by residues 36 to 37 and Gly44; that span reads QP. Residues 41–46, Lys99, Tyr132, Thr156, and Arg176 each bind 1D-myo-inositol 3-phosphate; that span reads DAGGMN. UDP-N-acetyl-alpha-D-glucosamine-binding residues include Arg250, Lys255, and Arg316. Mg(2+) is bound by residues Phe325, Arg326, and Cys328. Positions 338 and 346 each coordinate UDP-N-acetyl-alpha-D-glucosamine. Thr352 lines the Mg(2+) pocket.

The protein belongs to the glycosyltransferase group 1 family. MshA subfamily. In terms of assembly, homodimer.

It carries out the reaction 1D-myo-inositol 3-phosphate + UDP-N-acetyl-alpha-D-glucosamine = 1D-myo-inositol 2-acetamido-2-deoxy-alpha-D-glucopyranoside 3-phosphate + UDP + H(+). Catalyzes the transfer of a N-acetyl-glucosamine moiety to 1D-myo-inositol 3-phosphate to produce 1D-myo-inositol 2-acetamido-2-deoxy-glucopyranoside 3-phosphate in the mycothiol biosynthesis pathway. This is D-inositol 3-phosphate glycosyltransferase from Stackebrandtia nassauensis (strain DSM 44728 / CIP 108903 / NRRL B-16338 / NBRC 102104 / LLR-40K-21).